We begin with the raw amino-acid sequence, 177 residues long: R-phycoerythrin beta chain (177 aa).

Positions 50 and 61 each coordinate phycourobilin. N72 is modified (N4-methylasparagine). Positions 82 and 158 each coordinate (2R,3E)-phycoerythrobilin.

The protein belongs to the phycobiliprotein family. In terms of assembly, heterodimer of an alpha and a beta chain. Post-translationally, contains two covalently linked phycoerythrobilin chromophores and one covalently linked phycourobilin chromophore.

It is found in the plastid. Its subcellular location is the chloroplast thylakoid membrane. Light-harvesting photosynthetic bile pigment-protein from the phycobiliprotein complex. The sequence is that of R-phycoerythrin beta chain (cpeB) from Pyropia haitanensis (Red seaweed).